Consider the following 210-residue polypeptide: Probable glutathione peroxidase 8 (210 aa).

The chain crosses the membrane as a helical span at residues 13-35; that stretch reads ASRAGLFKVLLSVALCMGSLYLL.

It belongs to the glutathione peroxidase family.

The protein resides in the membrane. It catalyses the reaction 2 glutathione + H2O2 = glutathione disulfide + 2 H2O. The chain is Probable glutathione peroxidase 8 (gpx8) from Danio rerio (Zebrafish).